Here is a 147-residue protein sequence, read N- to C-terminus: DNA polymerase III subunit chi (147 aa).

Belongs to the DNA polymerase III chi/HolC chain family. In terms of assembly, the DNA polymerase III holoenzyme complex contains at least 10 different subunits organized into 3 functionally essential subassemblies: the Pol III core, the beta sliding clamp processivity factor and the clamp-loading complex. The Pol III core (subunits alpha, epsilon and theta) contains the polymerase and the 3'-5' exonuclease proofreading activities. The polymerase is tethered to the template via the dimeric beta sliding clamp processivity factor. The clamp-loading complex (also called gamma complex) assembles the beta sliding clamp onto the primed template and plays a central role in the organization and communication at the replication fork. The clamp-loading complex contains delta, delta', psi and chi, and 3 copies of either or both of two different DnaX proteins, gamma and tau. The DNA replisome complex has a single clamp loader (3 tau and 1 each of delta, delta', psi and chi subunits) which binds 3 Pol III cores (1 core on the leading strand and 2 on the lagging strand) each with a beta sliding clamp dimer. Additional proteins in the replisome are other copies of gamma, psi (holD) and chi (this protein), SSB, DNA helicase and RNA primase. The clamp loader hydrolyzes ATP to assemble the beta processivity factor onto the primed template and plays a central role in the organization and communication at the replication fork. The only subunit of the DNA polymerase III holoenzyme known to interact with single-stranded DNA binding protein (SSB). Interacts directly with the psi subunit (holD). Interacts directly with DNA helicase YoaA. It binds to HolD and YoaA, but not both simultaneously.

The enzyme catalyses DNA(n) + a 2'-deoxyribonucleoside 5'-triphosphate = DNA(n+1) + diphosphate. Its function is as follows. Part of the beta sliding clamp loading complex, which hydrolyzes ATP to load the beta clamp onto primed DNA to form the DNA replication pre-initiation complex. DNA polymerase III is a complex, multichain enzyme responsible for most of the replicative synthesis in bacteria. This DNA polymerase also exhibits 3' to 5' exonuclease activity. Genetically identified as involved in the repair of replication forks and tolerance of the chain-terminating nucleoside analog 3' AZT. This subunit may stabilize YoaA and/or stimulate the helicase activity of YoaA. The polypeptide is DNA polymerase III subunit chi (Escherichia coli (strain K12)).